The sequence spans 950 residues: UvrABC system protein A (950 aa).

36-43 (GKSGSGKS) contributes to the ATP binding site. A C4-type zinc finger spans residues 260–287 (CPLCGFSLPLIEPRLFSFNSPFGACSEC). 2 ABC transporter domains span residues 317-599 (FKTS…KNSL) and 619-947 (ADKG…MFLK). Residue 651–658 (GVSGSGKS) participates in ATP binding. The C4-type zinc-finger motif lies at 750–776 (CEKCQGDGYLNIQMHFLPDVFVPCDLC).

This sequence belongs to the ABC transporter superfamily. UvrA family. As to quaternary structure, forms a heterotetramer with UvrB during the search for lesions.

The protein resides in the cytoplasm. In terms of biological role, the UvrABC repair system catalyzes the recognition and processing of DNA lesions. UvrA is an ATPase and a DNA-binding protein. A damage recognition complex composed of 2 UvrA and 2 UvrB subunits scans DNA for abnormalities. When the presence of a lesion has been verified by UvrB, the UvrA molecules dissociate. The chain is UvrABC system protein A from Borreliella burgdorferi (strain ATCC 35210 / DSM 4680 / CIP 102532 / B31) (Borrelia burgdorferi).